Reading from the N-terminus, the 113-residue chain is MATRNALRIVSRRFSSGKVLSEEERAAENVFIKKMEQEKLQKLARQGPGEQAAGSASEAKVAGATASASAESGPKVSEDKNRNYAVVAGVVAIVGSIGWYLKAGGKKQPEVQE.

A mitochondrion-targeting transit peptide spans 1 to 14; it reads MATRNALRIVSRRF. The disordered stretch occupies residues 41–79; sequence QKLARQGPGEQAAGSASEAKVAGATASASAESGPKVSED. Residues 55–73 show a composition bias toward low complexity; sequence SASEAKVAGATASASAESG.

The protein resides in the mitochondrion. This is an uncharacterized protein from Arabidopsis thaliana (Mouse-ear cress).